Here is a 298-residue protein sequence, read N- to C-terminus: HTH-type transcriptional regulator ArgP (298 aa).

Positions Val4–Thr60 constitute an HTH lysR-type domain. The segment at residues Phe21–Lys40 is a DNA-binding region (H-T-H motif).

It belongs to the LysR transcriptional regulatory family. In terms of assembly, homodimer.

In terms of biological role, controls the transcription of genes involved in arginine and lysine metabolism. The sequence is that of HTH-type transcriptional regulator ArgP from Photobacterium profundum (strain SS9).